Here is a 152-residue protein sequence, read N- to C-terminus: Serglycin (152 aa).

The N-terminal stretch at 1-25 (MQVPVGSRLVLALAFVLVWGSSVQG) is a signal peptide. Positions 26 to 74 (YPARRARYQWVRCKPNGFFANCIEEKGPQFDLIDESNNIGPPMNNPVLM) are cleaved as a propeptide — activation peptide. Cys-38 and Cys-47 are joined by a disulfide. Residues 66–115 (PPMNNPVLMEGPSKDFISNYDDYGSGSGSGSGSGSGSGSGSGSGFLGDME) are disordered. 10 tandem repeats follow at residues 89–90 (GS), 91–92 (GS), 93–94 (GS), 95–96 (GS), 97–98 (GS), 99–100 (GS), 101–102 (GS), 103–104 (GS), 105–106 (GS), and 107–108 (GS). The tract at residues 89-108 (GSGSGSGSGSGSGSGSGSGS) is 10 X 2 AA tandem repeats of G-S. A compositionally biased stretch (gly residues) spans 90–110 (SGSGSGSGSGSGSGSGSGSGF). O-linked (Xyl...) (glycosaminoglycan) serine glycosylation is found at Ser-92 and Ser-94. O-linked (Xyl...) (glycosaminoglycan) serine glycans are attached at residues Ser-98, Ser-100, Ser-102, Ser-104, Ser-106, and Ser-108.

It belongs to the serglycin family. As to quaternary structure, binds to activated CD44 and to GZMB. In terms of processing, O-glycosylated; contains chondroitin sulfate and heparan sulfate.

The protein localises to the cytoplasmic granule. It localises to the cytolytic granule. It is found in the secreted. The protein resides in the extracellular space. Its subcellular location is the golgi apparatus. Functionally, plays a role in formation of mast cell secretory granules and mediates storage of various compounds in secretory vesicles. Required for storage of some proteases in both connective tissue and mucosal mast cells and for storage of granzyme B in T-lymphocytes. Plays a role in localizing neutrophil elastase in azurophil granules of neutrophils. Mediates processing of MMP2. Plays a role in cytotoxic cell granule-mediated apoptosis by forming a complex with granzyme B which is delivered to cells by perforin to induce apoptosis. Regulates the secretion of TNF-alpha and may also regulate protease secretion. Inhibits bone mineralization. This chain is Serglycin (Srgn), found in Mus musculus (Mouse).